The primary structure comprises 209 residues: MSNVHVIDHPLVQHKLTLMRRKDASTNSFRRLLGELSTLMAYEVTRDMPLQDIQIETPLETMTGKVIDGKKLVLVSILRAGNGFLDGMLNVVPGARIGHIGLYRDPDTLQPVEYYFKMPSEMAERDIIVVDPMLATGNSAAAAVARLKQLQPRSIKFVCLLAAPEGVATLQKAHPDVPIYTAAIDRELNDHGYILPGLGDAGDRIFGTK.

5-phospho-alpha-D-ribose 1-diphosphate contacts are provided by residues Arg-79, Arg-104, and 131 to 139; that span reads DPMLATGNS. Residues Ile-194 and 199-201 contribute to the uracil site; that span reads GDA. A 5-phospho-alpha-D-ribose 1-diphosphate-binding site is contributed by Asp-200.

The protein belongs to the UPRTase family. Mg(2+) is required as a cofactor.

It catalyses the reaction UMP + diphosphate = 5-phospho-alpha-D-ribose 1-diphosphate + uracil. It functions in the pathway pyrimidine metabolism; UMP biosynthesis via salvage pathway; UMP from uracil: step 1/1. Its activity is regulated as follows. Allosterically activated by GTP. Catalyzes the conversion of uracil and 5-phospho-alpha-D-ribose 1-diphosphate (PRPP) to UMP and diphosphate. This is Uracil phosphoribosyltransferase from Acidovorax sp. (strain JS42).